The chain runs to 90 residues: Cell division protein CrgA (90 aa).

Residues 1–25 form a disordered region; sequence MPKARVTKNETAPVSSNPSANRTPV. The span at 9–22 shows a compositional bias: polar residues; it reads NETAPVSSNPSANR. 2 consecutive transmembrane segments (helical) span residues 38–58 and 67–87; these read VIMF…YLVG and LGAW…LMTM.

It belongs to the CrgA family.

It is found in the cell membrane. Functionally, involved in cell division. This Corynebacterium glutamicum (strain ATCC 13032 / DSM 20300 / JCM 1318 / BCRC 11384 / CCUG 27702 / LMG 3730 / NBRC 12168 / NCIMB 10025 / NRRL B-2784 / 534) protein is Cell division protein CrgA.